The chain runs to 273 residues: Pantothenate synthetase (273 aa).

27 to 34 contributes to the ATP binding site; sequence MGALHNGH. Histidine 34 serves as the catalytic Proton donor. Glutamine 58 contributes to the (R)-pantoate binding site. Residue glutamine 58 participates in beta-alanine binding. An ATP-binding site is contributed by 144–147; sequence GKKD. Position 150 (glutamine 150) interacts with (R)-pantoate. ATP-binding positions include valine 173 and 181-184; that span reads LSSR.

It belongs to the pantothenate synthetase family. Homodimer.

It is found in the cytoplasm. It carries out the reaction (R)-pantoate + beta-alanine + ATP = (R)-pantothenate + AMP + diphosphate + H(+). It functions in the pathway cofactor biosynthesis; (R)-pantothenate biosynthesis; (R)-pantothenate from (R)-pantoate and beta-alanine: step 1/1. In terms of biological role, catalyzes the condensation of pantoate with beta-alanine in an ATP-dependent reaction via a pantoyl-adenylate intermediate. The sequence is that of Pantothenate synthetase from Campylobacter fetus subsp. fetus (strain 82-40).